The primary structure comprises 131 residues: Profilin-11 (131 aa).

A disulfide bond links Cys-13 and Cys-115. Residues 81 to 97 carry the Involved in PIP2 interaction motif; sequence AVIRGKKGSGGITVKKT. Residue Thr-111 is modified to Phosphothreonine.

The protein belongs to the profilin family. As to quaternary structure, occurs in many kinds of cells as a complex with monomeric actin in a 1:1 ratio. Post-translationally, phosphorylated by MAP kinases.

It is found in the cytoplasm. Its subcellular location is the cytoskeleton. Binds to actin and affects the structure of the cytoskeleton. At high concentrations, profilin prevents the polymerization of actin, whereas it enhances it at low concentrations. The polypeptide is Profilin-11 (Zea mays (Maize)).